The chain runs to 102 residues: MANQKIRIRLKAFDHNILDQSAEKIVETAKNTGAKVAGPVPLPTEKDVVTILRATHKYKDSREQFEIRTHKRLIDILSPSPKTVDALMRLDLPAGVDIEIKL.

This sequence belongs to the universal ribosomal protein uS10 family. Part of the 30S ribosomal subunit.

Its function is as follows. Involved in the binding of tRNA to the ribosomes. This is Small ribosomal subunit protein uS10 from Clostridium novyi (strain NT).